The sequence spans 384 residues: Chaperone protein DnaJ (384 aa).

The region spanning 5–70 (DYYEVLGVSK…DKKAAYDRYG (66 aa)) is the J domain. Residues 16–47 (ASSDDIKKGYRRKAKELHPDRNKDDPNAEAQF) form a disordered region. Over residues 31 to 47 (ELHPDRNKDDPNAEAQF) the composition is skewed to basic and acidic residues. The segment at 143–221 (GLQKTINVPT…CQGAGRVEKD (79 aa)) adopts a CR-type zinc-finger fold. Residues Cys156, Cys159, Cys173, Cys176, Cys195, Cys198, Cys209, and Cys212 each coordinate Zn(2+). 4 CXXCXGXG motif repeats span residues 156–163 (CKTCNGSG), 173–180 (CPTCSGMG), 195–202 (CPTCSGLG), and 209–216 (CKSCQGAG).

It belongs to the DnaJ family. Homodimer. It depends on Zn(2+) as a cofactor.

The protein localises to the cytoplasm. Its function is as follows. Participates actively in the response to hyperosmotic and heat shock by preventing the aggregation of stress-denatured proteins and by disaggregating proteins, also in an autonomous, DnaK-independent fashion. Unfolded proteins bind initially to DnaJ; upon interaction with the DnaJ-bound protein, DnaK hydrolyzes its bound ATP, resulting in the formation of a stable complex. GrpE releases ADP from DnaK; ATP binding to DnaK triggers the release of the substrate protein, thus completing the reaction cycle. Several rounds of ATP-dependent interactions between DnaJ, DnaK and GrpE are required for fully efficient folding. Also involved, together with DnaK and GrpE, in the DNA replication of plasmids through activation of initiation proteins. The chain is Chaperone protein DnaJ from Roseobacter denitrificans (strain ATCC 33942 / OCh 114) (Erythrobacter sp. (strain OCh 114)).